A 149-amino-acid polypeptide reads, in one-letter code: MDPAFGNALAANVLLNICQQMQTDIHQHGFHISGNSFCRAVAWCLARLSEEFDVPDETPFIYILCHRPYLLLRAALELEVTVGNLRTLLVMVRTIMQYDTSRTATHGMYAALAAYFHRFPADFRFQFLLSEDRDWPLHIKCDLVRETTV.

The protein is Non-structural protein 7b of Bat coronavirus HKU9 (BtCoV).